A 232-amino-acid polypeptide reads, in one-letter code: Vesicle transport through interaction with t-SNAREs homolog 1B (232 aa).

Ala-2 carries the N-acetylalanine modification. Interaction with CLINT1 stretches follow at residues Ala-2–Glu-23 and Ala-69–Phe-73. Residues Ala-2–Leu-208 lie on the Cytoplasmic side of the membrane. Residues Ala-36–Thr-98 are a coiled coil. An Omega-N-methylarginine modification is found at Arg-107. Ser-138 bears the Phosphoserine mark. Positions Gly-160–Lys-201 form a coiled coil. A helical; Anchor for type IV membrane protein transmembrane segment spans residues Leu-209–Phe-229. Topologically, residues Arg-230 to His-232 are vesicular.

It belongs to the VTI1 family. Forms a SNARE complex with STX7, STX8 and VAMP8 which functions in the homotypic fusion of late endosomes. Component of the SNARE complex composed of STX7, STX8, VAMP7 and VIT1B that is required for heterotypic fusion of late endosomes with lysosomes. May interact with STX17. Interacts with CLINT1. Broadly expressed.

It localises to the early endosome membrane. The protein localises to the late endosome membrane. The protein resides in the lysosome membrane. It is found in the cytoplasmic granule. Its subcellular location is the recycling endosome membrane. Functionally, V-SNARE that mediates vesicle transport pathways through interactions with t-SNAREs on the target membrane. These interactions are proposed to mediate aspects of the specificity of vesicle trafficking and to promote fusion of the lipid bilayers. This chain is Vesicle transport through interaction with t-SNAREs homolog 1B (Vti1b), found in Mus musculus (Mouse).